Reading from the N-terminus, the 148-residue chain is Small ribosomal subunit protein uS13 (148 aa).

It belongs to the universal ribosomal protein uS13 family. As to quaternary structure, part of the 30S ribosomal subunit. Forms a loose heterodimer with protein S19. Forms two bridges to the 50S subunit in the 70S ribosome.

Functionally, located at the top of the head of the 30S subunit, it contacts several helices of the 16S rRNA. In the 70S ribosome it contacts the 23S rRNA (bridge B1a) and protein L5 of the 50S subunit (bridge B1b), connecting the 2 subunits; these bridges are implicated in subunit movement. The polypeptide is Small ribosomal subunit protein uS13 (Pyrococcus abyssi (strain GE5 / Orsay)).